The primary structure comprises 837 residues: V-type proton ATPase 116 kDa subunit a 1 (837 aa).

The Cytoplasmic segment spans residues 1 to 388 (MGELFRSEEM…DAYGIGSYRE (388 aa)). Residues 389–407 (INPAPYTIITFPFLFAVMF) traverse the membrane as a helical segment. Residues 408 to 409 (GD) are Vacuolar-facing. The chain crosses the membrane as a helical span at residues 410 to 426 (FGHGILMTLFAVWMVVR). Residues 427–441 (ESRILSQKIDNELFT) are Cytoplasmic-facing. A helical transmembrane segment spans residues 442–471 (MMFSGRYIILLMGLFSIYTGLIYNDCFSKA). The Vacuolar portion of the chain corresponds to 472–534 (LNLFGSSWSV…ATNKLTFLNS (63 aa)). Residues 535 to 554 (FKMKMSVVLGIIHMTFGVAL) form a helical membrane-spanning segment. The Cytoplasmic segment spans residues 555 to 572 (SLLNHIYFKKPLNIYLGF). A helical membrane pass occupies residues 573-593 (IPEMIFMTTLFGYLVILIIYK). The Vacuolar segment spans residues 594–638 (WCAYDASTSMVAPSLLIHFINMFLFSYQDTSLPMLYKGQMGLQCF). The chain crosses the membrane as a helical span at residues 639-658 (LVVCAIICVPWMLVVKPLIL). Residues 659 to 724 (RRQYLRRKHL…DTVVHQAIHT (66 aa)) lie on the Cytoplasmic side of the membrane. Residues 725 to 749 (IEYCLGCISNTASYLRLWALSLAHA) form a helical membrane-spanning segment. The Vacuolar portion of the chain corresponds to 750-770 (QLSEVLWTMVMHVGLSIRSLG). A helical transmembrane segment spans residues 771–809 (GGIALVFVFSAFATLTIAILLIMEGLSAFLHALRLHWVE). Topologically, residues 810–837 (FQNKFYMGTGFKFLPFSFENIREGKFDE) are cytoplasmic.

Belongs to the V-ATPase 116 kDa subunit family. As to quaternary structure, V-ATPase is a heteromultimeric enzyme made up of two complexes: the ATP-hydrolytic V1 complex and the proton translocation V0 complex. The V1 complex consists of three catalytic AB heterodimers that form a heterohexamer, three peripheral stalks each consisting of EG heterodimers, one central rotor including subunits D and F, and the regulatory subunits C and H. The proton translocation complex V0 consists of the proton transport subunit a, a ring of proteolipid subunits c9c'', rotary subunit d, subunits e and f, and two accessory subunits.

Its subcellular location is the cytoplasmic vesicle. It localises to the clathrin-coated vesicle membrane. The protein resides in the secretory vesicle. It is found in the synaptic vesicle membrane. The protein localises to the melanosome. Functionally, subunit of the V0 complex of vacuolar(H+)-ATPase (V-ATPase), a multisubunit enzyme composed of a peripheral complex (V1) that hydrolyzes ATP and a membrane integral complex (V0) that translocates protons. V-ATPase is responsible for acidifying and maintaining the pH of intracellular compartments and in some cell types, is targeted to the plasma membrane, where it is responsible for acidifying the extracellular environment. Required for assembly and activity of the vacuolar ATPase. The polypeptide is V-type proton ATPase 116 kDa subunit a 1 (atp6v0a1) (Xenopus tropicalis (Western clawed frog)).